Here is a 217-residue protein sequence, read N- to C-terminus: Probable transaldolase (217 aa).

Lys-83 serves as the catalytic Schiff-base intermediate with substrate.

This sequence belongs to the transaldolase family. Type 3B subfamily.

It is found in the cytoplasm. The catalysed reaction is D-sedoheptulose 7-phosphate + D-glyceraldehyde 3-phosphate = D-erythrose 4-phosphate + beta-D-fructose 6-phosphate. It participates in carbohydrate degradation; pentose phosphate pathway; D-glyceraldehyde 3-phosphate and beta-D-fructose 6-phosphate from D-ribose 5-phosphate and D-xylulose 5-phosphate (non-oxidative stage): step 2/3. Functionally, transaldolase is important for the balance of metabolites in the pentose-phosphate pathway. The polypeptide is Probable transaldolase (Bartonella tribocorum (strain CIP 105476 / IBS 506)).